Consider the following 390-residue polypeptide: Chorismate synthase (390 aa).

NADP(+)-binding residues include Arg39 and Arg45. FMN contacts are provided by residues 132–134 (RSS), 253–254 (NA), Gly298, 313–317 (KPIPT), and Arg339.

Belongs to the chorismate synthase family. Homotetramer. FMNH2 serves as cofactor.

It carries out the reaction 5-O-(1-carboxyvinyl)-3-phosphoshikimate = chorismate + phosphate. The protein operates within metabolic intermediate biosynthesis; chorismate biosynthesis; chorismate from D-erythrose 4-phosphate and phosphoenolpyruvate: step 7/7. Its function is as follows. Catalyzes the anti-1,4-elimination of the C-3 phosphate and the C-6 proR hydrogen from 5-enolpyruvylshikimate-3-phosphate (EPSP) to yield chorismate, which is the branch point compound that serves as the starting substrate for the three terminal pathways of aromatic amino acid biosynthesis. This reaction introduces a second double bond into the aromatic ring system. The protein is Chorismate synthase of Bacillus licheniformis (strain ATCC 14580 / DSM 13 / JCM 2505 / CCUG 7422 / NBRC 12200 / NCIMB 9375 / NCTC 10341 / NRRL NRS-1264 / Gibson 46).